The chain runs to 669 residues: DNA ligase (669 aa).

Residues 34–38, 83–84, and Glu114 contribute to the NAD(+) site; these read DAEYD and SL. The active-site N6-AMP-lysine intermediate is the Lys116. 4 residues coordinate NAD(+): Arg137, Glu171, Lys287, and Lys311. Residues Cys405, Cys408, Cys423, and Cys428 each contribute to the Zn(2+) site. Residues 591–669 form the BRCT domain; that stretch reads NVESYFAGKT…EERFLQELNK (79 aa).

Belongs to the NAD-dependent DNA ligase family. LigA subfamily. Requires Mg(2+) as cofactor. The cofactor is Mn(2+).

It carries out the reaction NAD(+) + (deoxyribonucleotide)n-3'-hydroxyl + 5'-phospho-(deoxyribonucleotide)m = (deoxyribonucleotide)n+m + AMP + beta-nicotinamide D-nucleotide.. Its function is as follows. DNA ligase that catalyzes the formation of phosphodiester linkages between 5'-phosphoryl and 3'-hydroxyl groups in double-stranded DNA using NAD as a coenzyme and as the energy source for the reaction. It is essential for DNA replication and repair of damaged DNA. This chain is DNA ligase, found in Bacillus cereus (strain 03BB102).